The sequence spans 848 residues: Aryl hydrocarbon receptor (848 aa).

A propeptide spanning residues Met-1–Tyr-9 is cleaved from the precursor. Residues Met-1–His-38 form a disordered region. Short sequence motifs (nuclear localization signal) lie at residues Arg-12–Arg-15 and Lys-36–Arg-41. The bHLH domain maps to Pro-26 to Lys-79. Residues Arg-37–Lys-65 form a DNA-binding region. Required for maintaining the overall integrity of the AHR:ARNT heterodimer and its transcriptional activity regions lie at residues Leu-49 to Phe-81, Leu-116 to Val-124, and Phe-260 to Ile-262. Residues Leu-63–Leu-71 carry the Nuclear export signal motif. Positions Gln-111–Ala-175 constitute a PAS 1 domain. A PAS 2 domain is found at Leu-266–Lys-336. The PAC domain occupies Met-342 to Glu-383. Positions Leu-421 to Ser-449 are disordered. Residues Pro-436–Ser-449 are compositionally biased toward polar residues.

As to quaternary structure, homodimer. Heterodimer; efficient DNA binding requires dimerization with another bHLH protein. Interacts with ARNT; the heterodimer ARNT:AHR binds to core DNA sequence 5'-TGCGTG-3' within the dioxin response element (DRE) of target gene promoters and activates their transcription. Binds MYBBP1A. Interacts with coactivators including SRC-1, RIP140 and NOCA7, and with the corepressor SMRT. Interacts with NEDD8 and IVNS1ABP. Interacts with BMAL1. Interacts with HSP90AB1. Interacts with TIPARP; leading to mono-ADP-ribosylation of AHR and subsequent inhibition of AHR. Mono-ADP-ribosylated, leading to inhibit transcription activator activity of AHR.

The protein resides in the cytoplasm. It is found in the nucleus. Ligand-activated transcription factor that enables cells to adapt to changing conditions by sensing compounds from the environment, diet, microbiome and cellular metabolism, and which plays important roles in development, immunity and cancer. Upon ligand binding, translocates into the nucleus, where it heterodimerizes with ARNT and induces transcription by binding to xenobiotic response elements (XRE). Regulates a variety of biological processes, including angiogenesis, hematopoiesis, drug and lipid metabolism, cell motility and immune modulation. Xenobiotics can act as ligands: upon xenobiotic-binding, activates the expression of multiple phase I and II xenobiotic chemical metabolizing enzyme genes (such as the CYP1A1 gene). Mediates biochemical and toxic effects of halogenated aromatic hydrocarbons. Next to xenobiotics, natural ligands derived from plants, microbiota, and endogenous metabolism are potent AHR agonists. Tryptophan (Trp) derivatives constitute an important class of endogenous AHR ligands. Acts as a negative regulator of anti-tumor immunity: indoles and kynurenic acid generated by Trp catabolism act as ligand and activate AHR, thereby promoting AHR-driven cancer cell motility and suppressing adaptive immunity. Regulates the circadian clock by inhibiting the basal and circadian expression of the core circadian component PER1. Inhibits PER1 by repressing the CLOCK-BMAL1 heterodimer mediated transcriptional activation of PER1. The heterodimer ARNT:AHR binds to core DNA sequence 5'-TGCGTG-3' within the dioxin response element (DRE) of target gene promoters and activates their transcription. The polypeptide is Aryl hydrocarbon receptor (Ahr) (Mus musculus castaneus (Southeastern Asian house mouse)).